The sequence spans 434 residues: Tryptophan--tRNA ligase (434 aa).

Residues 14-16 (TTS) and 22-23 (GN) contribute to the ATP site. Positions 15-23 (TSGTPHLGN) match the 'HIGH' region motif. L-tryptophan is bound at residue Asp-147. Residues 159–161 (GRD), Leu-199, and 206–210 (KMSKS) each bind ATP. The 'KMSKS' region motif lies at 206–210 (KMSKS).

This sequence belongs to the class-I aminoacyl-tRNA synthetase family. As to quaternary structure, homodimer.

The protein localises to the cytoplasm. The enzyme catalyses tRNA(Trp) + L-tryptophan + ATP = L-tryptophyl-tRNA(Trp) + AMP + diphosphate + H(+). Its function is as follows. Catalyzes the attachment of tryptophan to tRNA(Trp). This is Tryptophan--tRNA ligase from Xylella fastidiosa (strain 9a5c).